Reading from the N-terminus, the 335-residue chain is 2-acylglycerol O-acyltransferase 1 (335 aa).

2 helical membrane-spanning segments follow: residues 24-44 (WVLSFLLLVQVCIGIMVMLVL) and 104-124 (YIFGFHPHGIFVPGAFGNFCT). Asn180 is a glycosylation site (N-linked (GlcNAc...) asparagine).

The protein belongs to the diacylglycerol acyltransferase family. As to expression, expressed at high level in kidney and stomach. Expressed at lower level in brown and white adipose tissue, uterus and liver. Not detected in small intestine.

The protein localises to the endoplasmic reticulum membrane. It catalyses the reaction a 2-acylglycerol + an acyl-CoA = a 1,2-diacylglycerol + CoA. The enzyme catalyses 2-(9Z-octadecenoyl)-glycerol + butanoyl-CoA = 1-butanoyl-2-(9Z-octadecenoyl)-glycerol + CoA. The catalysed reaction is 2-(9Z-octadecenoyl)-glycerol + octanoyl-CoA = 1-octanoyl-2-(9Z-octadecenoyl)-glycerol + CoA. It carries out the reaction 2-(9Z-octadecenoyl)-glycerol + dodecanoyl-CoA = 1-dodecanoyl-2-(9Z-octadecenoyl)-glycerol + CoA. It catalyses the reaction 2-(9Z-octadecenoyl)-glycerol + tetradecanoyl-CoA = 1-tetradecanoyl-2-(9Z-octadecenoyl)-glycerol + CoA. The enzyme catalyses 2-(9Z-octadecenoyl)-glycerol + hexadecanoyl-CoA = 1-hexadecanoyl-2-(9Z-octadecenoyl)-glycerol + CoA. The catalysed reaction is 2-(9Z-octadecenoyl)-glycerol + octadecanoyl-CoA = 1-octadecanoyl-2-(9Z-octadecenoyl)-glycerol + CoA. It carries out the reaction eicosanoyl-CoA + 2-(9Z-octadecenoyl)-glycerol = 1-eicosanoyl-2-(9Z-octadecenoyl)-glycerol + CoA. It catalyses the reaction 2-(9Z-octadecenoyl)-glycerol + (9Z)-octadecenoyl-CoA = 1,2-di-(9Z-octadecenoyl)-glycerol + CoA. The enzyme catalyses 2-(9Z-octadecenoyl)-glycerol + (9Z,12Z)-octadecadienoyl-CoA = 1-(9Z,12Z-octadecadienoyl)-2-(9Z-octadecenoyl)-glycerol + CoA. The catalysed reaction is 2-(9Z-octadecenoyl)-glycerol + (5Z,8Z,11Z,14Z)-eicosatetraenoyl-CoA = 1-(5Z,8Z,11Z,14Z-eicosatetraenoyl)-2-(9Z-octadecenoyl)-glycerol + CoA. It carries out the reaction a 2-acylglycerol + an acyl-CoA = a 1,2-diacyl-sn-glycerol + CoA. It catalyses the reaction a 2-acylglycerol + an acyl-CoA = a 2,3-diacyl-sn-glycerol + CoA. The enzyme catalyses a 1-acylglycerol + an acyl-CoA = a 1,2-diacylglycerol + CoA. The catalysed reaction is 1-dodecanoylglycerol + (9Z)-octadecenoyl-CoA = 1-dodecanoyl-2-(9Z-octadecenoyl)-glycerol + CoA. It carries out the reaction 1-tetradecanoylglycerol + (9Z)-octadecenoyl-CoA = 1-tetradecanoyl-2-(9Z-octadecenoyl)-glycerol + CoA. It catalyses the reaction 1-hexadecanoylglycerol + (9Z)-octadecenoyl-CoA = 1-hexadecanoyl-2-(9Z-octadecenoyl)-glycerol + CoA. The enzyme catalyses 1-(9Z-octadecenoyl)-glycerol + (9Z)-octadecenoyl-CoA = 1,2-di-(9Z-octadecenoyl)-glycerol + CoA. The catalysed reaction is 1-(9Z,12Z-octadecadienoyl)-glycerol + (9Z)-octadecenoyl-CoA = 1-(9Z,12Z-octadecadienoyl)-2-(9Z-octadecenoyl)-glycerol + CoA. It carries out the reaction 1-(9Z,12Z,15Z-octadecatrienoyl)-glycerol + (9Z)-octadecenoyl-CoA = 1-(9Z,12Z,15Z-octadecatrienoyl)-2-(9Z-octadecenoyl)-glycerol + CoA. It catalyses the reaction 1-(5Z,8Z,11Z,14Z-eicosatetraenoyl)-glycerol + (9Z)-octadecenoyl-CoA = 1-(5Z,8Z,11Z,14Z-eicosatetraenoyl)-2-(9Z-octadecenoyl)-glycerol + CoA. The enzyme catalyses a 1-acylglycerol + an acyl-CoA = a 1,3-diacylglycerol + CoA. The catalysed reaction is 1-dodecanoylglycerol + (9Z)-octadecenoyl-CoA = 1-dodecanoyl-3-(9Z-octadecenoyl)-glycerol + CoA. It carries out the reaction 1-hexadecanoylglycerol + (9Z)-octadecenoyl-CoA = 1-(9Z-octadecenoyl)-3-hexadecanoylglycerol + CoA. It catalyses the reaction 1-octadecanoylglycerol + (9Z)-octadecenoyl-CoA = 1-octadecanoyl-3-(9Z-octadecenoyl)-glycerol + CoA. The enzyme catalyses 1-(9Z-octadecenoyl)-sn-glycerol + (9Z)-octadecenoyl-CoA = 1,3-di-(9Z-octadecenoyl)-glycerol + CoA. The catalysed reaction is 1-(9Z,12Z-octadecadienoyl)-glycerol + (9Z)-octadecenoyl-CoA = 1-(9Z-octadecenoyl)-3-(9Z,12Z-octadecadienoyl)-glycerol + CoA. It carries out the reaction 1-(9Z,12Z,15Z-octadecatrienoyl)-glycerol + (9Z)-octadecenoyl-CoA = 1-(9Z,12Z,15Z-octadecatrienoyl)-3-(9Z-octadecenoyl)-glycerol + CoA. It catalyses the reaction a 1-acyl-sn-glycerol + an acyl-CoA = a 1,3-diacyl-sn-glycerol + CoA. The enzyme catalyses a 3-acyl-sn-glycerol + an acyl-CoA = a 1,3-diacyl-sn-glycerol + CoA. The catalysed reaction is 3-octadecanoyl-sn-glycerol + (9Z)-octadecenoyl-CoA = 1-(9Z-octadecenoyl)-3-octadecanoyl-sn-glycerol + CoA. It functions in the pathway glycerolipid metabolism; triacylglycerol biosynthesis. In terms of biological role, involved in glycerolipid synthesis and lipid metabolism. Catalyzes the formation of diacylglycerol, the precursor of triacylglycerol, by transferring the acyl chain of a fatty acyl-CoA to a monoacylglycerol, mainly at the sn-1 or sn-3 positions. It uses both sn-2-monoacylglycerol (2-acylglycerol) and sn-1-monoacylglycerol (1-acyl-sn-glycerol) equally well as substrates, and uses sn-3-monoacylglycerol (3-acyl-sn-glycerol) with lower efficiency. Probably not involved in absorption of dietary fat in the small intestine. The polypeptide is 2-acylglycerol O-acyltransferase 1 (Mus musculus (Mouse)).